The primary structure comprises 181 residues: ECF RNA polymerase sigma factor EcfG (181 aa).

The tract at residues 15 to 77 (VPSLRAFAIS…FRSDYRKRRR (63 aa)) is sigma-70 factor domain-2. The tract at residues 103–155 (EEFRAALDKLPQDQREALILVGASGFSYEDAAAICGCAVGTIKSRVNRARSKL) is sigma-70 factor domain-4.

Belongs to the sigma-70 factor family. ECF subfamily.

Its function is as follows. Sigma factors are initiation factors that promote the attachment of RNA polymerase to specific initiation sites and are then released. Regulates expression of hpnP under a variety of stresses, including high temperature, pH stress, and presence of nonionic osmolytes. This is ECF RNA polymerase sigma factor EcfG from Rhodopseudomonas palustris (strain TIE-1).